The following is a 571-amino-acid chain: Proline--tRNA ligase (571 aa).

This sequence belongs to the class-II aminoacyl-tRNA synthetase family. ProS type 1 subfamily. As to quaternary structure, homodimer.

The protein resides in the cytoplasm. The enzyme catalyses tRNA(Pro) + L-proline + ATP = L-prolyl-tRNA(Pro) + AMP + diphosphate. Catalyzes the attachment of proline to tRNA(Pro) in a two-step reaction: proline is first activated by ATP to form Pro-AMP and then transferred to the acceptor end of tRNA(Pro). As ProRS can inadvertently accommodate and process non-cognate amino acids such as alanine and cysteine, to avoid such errors it has two additional distinct editing activities against alanine. One activity is designated as 'pretransfer' editing and involves the tRNA(Pro)-independent hydrolysis of activated Ala-AMP. The other activity is designated 'posttransfer' editing and involves deacylation of mischarged Ala-tRNA(Pro). The misacylated Cys-tRNA(Pro) is not edited by ProRS. The sequence is that of Proline--tRNA ligase from Pseudomonas putida (strain W619).